A 468-amino-acid chain; its full sequence is Acyltransferase R4 (468 aa).

7 helical membrane-spanning segments follow: residues Gly21 to Asp41, Leu70 to Phe90, Leu133 to Phe153, Phe252 to Trp272, Asp308 to Trp328, Phe388 to Trp408, and Ile423 to Phe443.

This sequence belongs to the acyltransferase 3 family.

It localises to the membrane. It functions in the pathway secondary metabolite biosynthesis. Its function is as follows. Acyltransferase; part of the gene cluster that mediates the biosynthesis of squalestatin S1 (SQS1, also known as zaragozic acid A), a heavily oxidized fungal polyketide that offers potent cholesterol lowering activity by targeting squalene synthase (SS). SQS1 is composed of a 2,8-dioxobicyclic[3.2.1]octane-3,4,5-tricarboxyclic acid core that is connected to two lipophilic polyketide arms. These initial steps feature the priming of an unusual benzoic acid starter unit onto the highly reducing polyketide synthase pks2, followed by oxaloacetate extension and product release to generate a tricarboxylic acid containing product. The phenylalanine ammonia lyase (PAL) M7 and the acyl-CoA ligase M9 are involved in transforming phenylalanine into benzoyl-CoA. The citrate synthase-like protein R3 is involved in connecting the C-alpha-carbons of the hexaketide chain and oxaloacetate to afford the tricarboxylic acid unit. The potential hydrolytic enzymes, M8 and M10, are in close proximity to pks2 and may participate in product release. On the other side, the tetraketide arm is synthesized by a the squalestatin tetraketide synthase pks1 and enzymatically esterified to the core in the last biosynthetic step, by the acetyltransferase M4. The biosynthesis of the tetraketide must involve 3 rounds of chain extension. After the first and second rounds methyl-transfer occurs, and in all rounds of extension the ketoreductase and dehydratase are active. The enoyl reductase and C-MeT of pks1 are not active in the final round of extension. The acetyltransferase M4 appears to have a broad substrate selectivity for its acyl CoA substrate, allowing the in vitro synthesis of novel squalestatins. The biosynthesis of SQS1 requires several oxidative steps likely performed by oxidoreductases M1, R1 and R2. Finally, in support of the identification of the cluster as being responsible for SQS1 production, the cluster contains a gene encoding a putative squalene synthase (SS) R6, suggesting a likely mechanism for self-resistance. This chain is Acyltransferase R4, found in Phoma sp. (strain ATCC 20986 / MF5453).